Reading from the N-terminus, the 301-residue chain is Methionyl-tRNA formyltransferase (301 aa).

(6S)-5,6,7,8-tetrahydrofolate is bound at residue 109 to 112 (SLLP).

It belongs to the Fmt family.

The enzyme catalyses L-methionyl-tRNA(fMet) + (6R)-10-formyltetrahydrofolate = N-formyl-L-methionyl-tRNA(fMet) + (6S)-5,6,7,8-tetrahydrofolate + H(+). Its function is as follows. Attaches a formyl group to the free amino group of methionyl-tRNA(fMet). The formyl group appears to play a dual role in the initiator identity of N-formylmethionyl-tRNA by promoting its recognition by IF2 and preventing the misappropriation of this tRNA by the elongation apparatus. The protein is Methionyl-tRNA formyltransferase of Jannaschia sp. (strain CCS1).